The primary structure comprises 182 residues: Crossover junction endodeoxyribonuclease RuvC (182 aa).

Catalysis depends on residues Asp-7, Glu-68, and Asp-141. Residues Asp-7, Glu-68, and Asp-141 each coordinate Mg(2+).

The protein belongs to the RuvC family. As to quaternary structure, homodimer which binds Holliday junction (HJ) DNA. The HJ becomes 2-fold symmetrical on binding to RuvC with unstacked arms; it has a different conformation from HJ DNA in complex with RuvA. In the full resolvosome a probable DNA-RuvA(4)-RuvB(12)-RuvC(2) complex forms which resolves the HJ. Requires Mg(2+) as cofactor.

Its subcellular location is the cytoplasm. The catalysed reaction is Endonucleolytic cleavage at a junction such as a reciprocal single-stranded crossover between two homologous DNA duplexes (Holliday junction).. The RuvA-RuvB-RuvC complex processes Holliday junction (HJ) DNA during genetic recombination and DNA repair. Endonuclease that resolves HJ intermediates. Cleaves cruciform DNA by making single-stranded nicks across the HJ at symmetrical positions within the homologous arms, yielding a 5'-phosphate and a 3'-hydroxyl group; requires a central core of homology in the junction. The consensus cleavage sequence is 5'-(A/T)TT(C/G)-3'. Cleavage occurs on the 3'-side of the TT dinucleotide at the point of strand exchange. HJ branch migration catalyzed by RuvA-RuvB allows RuvC to scan DNA until it finds its consensus sequence, where it cleaves and resolves the cruciform DNA. This Thermobifida fusca (strain YX) protein is Crossover junction endodeoxyribonuclease RuvC.